The chain runs to 139 residues: Thioredoxin 2 (139 aa).

A zinc finger lies at 5 to 18 (CTHCQAINRIPDDR). A Thioredoxin domain is found at 26–139 (GRCGHDLFDG…PFDSWLNESL (114 aa)). A disulfide bond links Cys-64 and Cys-67.

Belongs to the thioredoxin family.

It localises to the cytoplasm. It carries out the reaction [protein]-dithiol + NAD(+) = [protein]-disulfide + NADH + H(+). The catalysed reaction is [protein]-dithiol + NADP(+) = [protein]-disulfide + NADPH + H(+). Functionally, efficient electron donor for the essential enzyme ribonucleotide reductase. Is also able to reduce the interchain disulfide bridges of insulin. The protein is Thioredoxin 2 (trxC) of Escherichia coli O6:H1 (strain CFT073 / ATCC 700928 / UPEC).